We begin with the raw amino-acid sequence, 237 residues long: C-type lectin domain family 4 member A (237 aa).

Over methionine 1–alanine 48 the chain is Cytoplasmic. The ITIM motif motif lies at isoleucine 5–valine 10. The chain crosses the membrane as a helical; Signal-anchor for type II membrane protein span at residues serine 49–phenylalanine 69. Residues glutamine 70–leucine 237 lie on the Extracellular side of the membrane. Cystine bridges form between cysteine 106/cysteine 117, cysteine 134/cysteine 230, and cysteine 203/cysteine 222. The region spanning phenylalanine 113–glutamate 231 is the C-type lectin domain. Positions 143, 145, and 149 each coordinate Ca(2+). Asparagine 185 carries an N-linked (GlcNAc...) asparagine glycan. Ca(2+) contacts are provided by glutamate 195, serine 197, and glutamate 201. Alpha-D-mannopyranose contacts are provided by residues glutamate 195–serine 197 and glutamate 201. Position 207-209 (asparagine 207–arginine 209) interacts with N-acetyl-D-glucosamine. The Ca(2+) site is built by asparagine 218, aspartate 219, and glutamate 231.

May interact with PTPN6 via its ITIM motif. Expressed preferentially in hematopoietic tissues. Expressed in all circulating Ag-presenting cells such as dendritic cells, myeloid cells, monocytes, macrophages, B-cells and epidermal Langerhans cells (at protein level). Expressed in peripheral blood leukocytes, neutrophils, moderate quantities in spleen, lymph node, and bone marrow, and at very low levels in thymus.

The protein localises to the cell membrane. In terms of biological role, C-type lectin receptor that binds carbohydrates mannose and fucose but also weakly interacts with N-acetylglucosamine (GlcNAc) in a Ca(2+)-dependent manner. Involved in regulating immune reactivity. Once triggered by antigen, it is internalized by clathrin-dependent endocytosis and delivers its antigenic cargo into the antigen presentation pathway resulting in cross-priming of CD8(+) T cells. This cross-presentation and cross-priming are enhanced by TLR7 and TLR8 agonists with increased expansion of the CD8(+) T cells, high production of IFNG and TNF with reduced levels of IL4, IL5 and IL13. In plasmacytoid dendritic cells, inhibits TLR9-mediated IFNA and TNF production. May be involved via its ITIM motif (immunoreceptor tyrosine-based inhibitory motifs) in the inhibition of B-cell-receptor-mediated calcium mobilization and protein tyrosine phosphorylation. Functionally, (Microbial infection) Involved in the interaction between HIV-1 virus and dendritic cells. Enhances HIV-1 binding/entry and virus infection. Requires ITIM motif-associated signal transduction pathway involving phosphatases PTPN6 and PTPN11, SYK, Src kinases and MAP kinases. The polypeptide is C-type lectin domain family 4 member A (Homo sapiens (Human)).